The sequence spans 2063 residues: Rho guanine nucleotide exchange factor 17 (2063 aa).

Disordered regions lie at residues 22–365, 380–466, 485–581, and 602–958; these read WSGG…MSDS, YLAS…SNPD, LRVR…AEED, and IQRM…RHVR. Residues 65-76 are compositionally biased toward low complexity; it reads PLAAPAQPRPLR. The span at 87-96 shows a compositional bias: basic and acidic residues; sequence RRFDAPRLDD. A compositionally biased stretch (low complexity) spans 108-122; sequence PAAAEEAAEGPARGA. Phosphoserine occurs at positions 142 and 152. Residues 225–250 are compositionally biased toward low complexity; that stretch reads AGARASCSSSSIAASYPVSRSRAASS. Residue serine 310 is modified to Phosphoserine. Polar residues predominate over residues 313–323; sequence LNLSSMNSAGV. Phosphoserine occurs at positions 326, 332, 383, 387, 395, 410, and 420. The span at 388–397 shows a compositional bias: polar residues; it reads RGSSRYSSTE. Residues 445–456 are compositionally biased toward basic and acidic residues; that stretch reads ALRDGGFEPEKS. Serine 461 and serine 546 each carry phosphoserine. Over residues 562-573 the composition is skewed to low complexity; that stretch reads SALKSSSSELLL. Serine 619 carries the post-translational modification Phosphoserine. Over residues 671-680 the composition is skewed to polar residues; that stretch reads LSSSSAQTNH. Residue serine 696 is modified to Phosphoserine. Phosphothreonine occurs at positions 699 and 702. Residue serine 735 is modified to Phosphoserine. A compositionally biased stretch (polar residues) spans 754 to 765; the sequence is SVDSNLLGSLSP. Residues 827 to 836 show a composition bias toward basic and acidic residues; it reads SLSDPSRRGE. Serine 914 bears the Phosphoserine mark. The segment covering 917 to 928 has biased composition (basic residues); it reads LIRRGSKKRPAR. Basic and acidic residues predominate over residues 930 to 939; sequence SHQELRRDEG. Phosphoserine is present on residues serine 961 and serine 1002. The disordered stretch occupies residues 1034–1060; sequence APPSAEAKPPEAARPADEPTPASKCCS. Positions 1041-1050 are enriched in basic and acidic residues; the sequence is KPPEAARPAD. Positions 1066-1254 constitute a DH domain; the sequence is MRKHVAMTLL…KQVAERINKG (189 aa). At serine 1331 the chain carries Phosphoserine. Disordered regions lie at residues 1564-1584, 1616-1719, 1991-2020, and 2036-2055; these read HREP…PAGP, GLEM…SSHG, TPPP…PAPA, and FRLS…DDST. Residues 1568–1582 show a composition bias toward pro residues; the sequence is PPSLRSPPETAPEPA. Residues 1644 to 1680 show a composition bias toward low complexity; that stretch reads SPSPSGTLQSQASRSTISSSFGNEETPSSKEATAETT. Residues 2004-2013 show a composition bias toward basic and acidic residues; the sequence is PSLEHRDSPW.

In terms of tissue distribution, highly expressed in the heart.

Functionally, acts as a guanine nucleotide exchange factor (GEF) for RhoA GTPases. The chain is Rho guanine nucleotide exchange factor 17 (ARHGEF17) from Homo sapiens (Human).